A 336-amino-acid chain; its full sequence is MGSGEEPSQMRRALVDSLAGAISGGISRTVTSPLDVIKIRFQVQLEPTTSWGILRRDVYGPSKYTGLLQATKDILREEGLPGFWRGNVPALFMYMPYTAIQFTVLHKLKTFASGSSRTEDHLDLSPYLSYVSGAIAGCTATIGSYPFDLLRTILASQGEPKVYPNMRSAFIDIIKTRGVQGLYSGLSPTLVEIIPYAGLQFGSYDTFKRSMMTWNRYKYSHLSFGSEDDSVSSFQLFLCGFAAGTFSKAACHPLDVVKKRFQIEGLKRHPRYGAPIESSTYKGMYHALKEIVVKEGFGGLYKGLFPSLVKSAPAGAVTFVVYEYISDWIGCKAGVE.

6 helical membrane passes run 11–27, 88–105, 127–150, 182–199, 230–246, and 303–322; these read RRALVDSLAGAISGGIS, VPALFMYMPYTAIQFTVL, YLSYVSGAIAGCTATIGSYPFDLL, LYSGLSPTLVEIIPYAGL, SVSSFQLFLCGFAAGTF, and GLFPSLVKSAPAGAVTFVVY. 3 Solcar repeats span residues 11 to 111, 124 to 210, and 231 to 328; these read RRAL…LKTF, LSPY…FKRS, and VSSF…ISDW.

Belongs to the mitochondrial carrier (TC 2.A.29) family. In terms of tissue distribution, ubiquitous with highest expression in pollen.

The protein localises to the mitochondrion inner membrane. In terms of biological role, mitochondrial transporter that mediates uptake of thiamine diphosphate (ThDP) into mitochondria. The sequence is that of Mitochondrial thiamine diphosphate carrier 1 from Zea mays (Maize).